We begin with the raw amino-acid sequence, 503 residues long: Maturase K (503 aa).

Belongs to the intron maturase 2 family. MatK subfamily.

The protein resides in the plastid. The protein localises to the chloroplast. Functionally, usually encoded in the trnK tRNA gene intron. Probably assists in splicing its own and other chloroplast group II introns. The chain is Maturase K from Liquidambar styraciflua (Sweetgum tree).